A 397-amino-acid polypeptide reads, in one-letter code: Acetate kinase (397 aa).

Asn-7 is a Mg(2+) binding site. ATP is bound at residue Lys-14. Arg-91 lines the substrate pocket. The Proton donor/acceptor role is filled by Asp-147. Residues 207-211 (HLGNG), 282-284 (DFR), and 330-334 (GLGEN) each bind ATP. Residue Glu-383 coordinates Mg(2+).

Belongs to the acetokinase family. Homodimer. Requires Mg(2+) as cofactor. It depends on Mn(2+) as a cofactor.

The protein resides in the cytoplasm. The catalysed reaction is acetate + ATP = acetyl phosphate + ADP. It participates in metabolic intermediate biosynthesis; acetyl-CoA biosynthesis; acetyl-CoA from acetate: step 1/2. Its function is as follows. Catalyzes the formation of acetyl phosphate from acetate and ATP. Can also catalyze the reverse reaction. This is Acetate kinase from Moorella thermoacetica (strain ATCC 39073 / JCM 9320).